The sequence spans 373 residues: Protein-glutamate methylesterase/protein-glutamine glutaminase 2 (373 aa).

The region spanning 4-121 is the Response regulatory domain; that stretch reads KVLVVDDSGF…SRNPEKVKQL (118 aa). Asp55 bears the 4-aspartylphosphate mark. The tract at residues 136 to 181 is disordered; it reads FSSYSAPAPQPASAPAPAPSSFASSRSPAPAPAPARAAAPAASANS. The span at 143 to 153 shows a compositional bias: pro residues; the sequence is APQPASAPAPA. Over residues 154–181 the composition is skewed to low complexity; the sequence is PSSFASSRSPAPAPAPARAAAPAASANS. The CheB-type methylesterase domain maps to 182–370; sequence PAPKRKAYKL…LDDIGRHLVE (189 aa). Catalysis depends on residues Ser197, His224, and Asp317.

It belongs to the CheB family. Post-translationally, phosphorylated by CheA. Phosphorylation of the N-terminal regulatory domain activates the methylesterase activity.

Its subcellular location is the cytoplasm. The enzyme catalyses [protein]-L-glutamate 5-O-methyl ester + H2O = L-glutamyl-[protein] + methanol + H(+). The catalysed reaction is L-glutaminyl-[protein] + H2O = L-glutamyl-[protein] + NH4(+). Its function is as follows. Involved in chemotaxis. Part of a chemotaxis signal transduction system that modulates chemotaxis in response to various stimuli. Catalyzes the demethylation of specific methylglutamate residues introduced into the chemoreceptors (methyl-accepting chemotaxis proteins or MCP) by CheR. Also mediates the irreversible deamidation of specific glutamine residues to glutamic acid. The chain is Protein-glutamate methylesterase/protein-glutamine glutaminase 2 from Pseudomonas fluorescens (strain ATCC BAA-477 / NRRL B-23932 / Pf-5).